The chain runs to 424 residues: Gamma-glutamyl phosphate reductase (424 aa).

The protein belongs to the gamma-glutamyl phosphate reductase family.

It localises to the cytoplasm. It catalyses the reaction L-glutamate 5-semialdehyde + phosphate + NADP(+) = L-glutamyl 5-phosphate + NADPH + H(+). The protein operates within amino-acid biosynthesis; L-proline biosynthesis; L-glutamate 5-semialdehyde from L-glutamate: step 2/2. In terms of biological role, catalyzes the NADPH-dependent reduction of L-glutamate 5-phosphate into L-glutamate 5-semialdehyde and phosphate. The product spontaneously undergoes cyclization to form 1-pyrroline-5-carboxylate. The protein is Gamma-glutamyl phosphate reductase of Dehalococcoides mccartyi (strain CBDB1).